Reading from the N-terminus, the 89-residue chain is Small ribosomal subunit protein uS15 (89 aa).

It belongs to the universal ribosomal protein uS15 family. In terms of assembly, part of the 30S ribosomal subunit. Forms a bridge to the 50S subunit in the 70S ribosome, contacting the 23S rRNA.

In terms of biological role, one of the primary rRNA binding proteins, it binds directly to 16S rRNA where it helps nucleate assembly of the platform of the 30S subunit by binding and bridging several RNA helices of the 16S rRNA. Its function is as follows. Forms an intersubunit bridge (bridge B4) with the 23S rRNA of the 50S subunit in the ribosome. In Nitratidesulfovibrio vulgaris (strain DP4) (Desulfovibrio vulgaris), this protein is Small ribosomal subunit protein uS15.